Here is a 539-residue protein sequence, read N- to C-terminus: Chaperonin GroEL (539 aa).

ATP-binding positions include 30-33 (TLGP), lysine 51, 87-91 (DGTTT), glycine 415, 479-481 (NAA), and aspartate 495.

The protein belongs to the chaperonin (HSP60) family. Forms a cylinder of 14 subunits composed of two heptameric rings stacked back-to-back. Interacts with the co-chaperonin GroES.

Its subcellular location is the cytoplasm. It carries out the reaction ATP + H2O + a folded polypeptide = ADP + phosphate + an unfolded polypeptide.. In terms of biological role, together with its co-chaperonin GroES, plays an essential role in assisting protein folding. The GroEL-GroES system forms a nano-cage that allows encapsulation of the non-native substrate proteins and provides a physical environment optimized to promote and accelerate protein folding. The protein is Chaperonin GroEL of Kluyvera intermedia (Enterobacter intermedius).